A 281-amino-acid polypeptide reads, in one-letter code: NADPH-dependent 7-cyano-7-deazaguanine reductase (281 aa).

Substrate is bound at residue 88–90 (IES). 90-91 (SK) is an NADPH binding site. C189 acts as the Thioimide intermediate in catalysis. D196 (proton donor) is an active-site residue. Position 228 to 229 (228 to 229 (HE)) interacts with substrate. 257–258 (RG) contacts NADPH.

This sequence belongs to the GTP cyclohydrolase I family. QueF type 2 subfamily. In terms of assembly, homodimer.

It localises to the cytoplasm. The enzyme catalyses 7-aminomethyl-7-carbaguanine + 2 NADP(+) = 7-cyano-7-deazaguanine + 2 NADPH + 3 H(+). Its pathway is tRNA modification; tRNA-queuosine biosynthesis. Catalyzes the NADPH-dependent reduction of 7-cyano-7-deazaguanine (preQ0) to 7-aminomethyl-7-deazaguanine (preQ1). In Yersinia pestis bv. Antiqua (strain Antiqua), this protein is NADPH-dependent 7-cyano-7-deazaguanine reductase.